Here is a 362-residue protein sequence, read N- to C-terminus: Phosphoserine aminotransferase (362 aa).

Arginine 43 serves as a coordination point for L-glutamate. Pyridoxal 5'-phosphate contacts are provided by residues 77–78, tryptophan 103, threonine 153, aspartate 173, and glutamine 196; that span reads AR. Lysine 197 is subject to N6-(pyridoxal phosphate)lysine.

It belongs to the class-V pyridoxal-phosphate-dependent aminotransferase family. SerC subfamily. In terms of assembly, homodimer. It depends on pyridoxal 5'-phosphate as a cofactor.

The protein resides in the cytoplasm. The catalysed reaction is O-phospho-L-serine + 2-oxoglutarate = 3-phosphooxypyruvate + L-glutamate. It carries out the reaction 4-(phosphooxy)-L-threonine + 2-oxoglutarate = (R)-3-hydroxy-2-oxo-4-phosphooxybutanoate + L-glutamate. It participates in amino-acid biosynthesis; L-serine biosynthesis; L-serine from 3-phospho-D-glycerate: step 2/3. Its pathway is cofactor biosynthesis; pyridoxine 5'-phosphate biosynthesis; pyridoxine 5'-phosphate from D-erythrose 4-phosphate: step 3/5. Catalyzes the reversible conversion of 3-phosphohydroxypyruvate to phosphoserine and of 3-hydroxy-2-oxo-4-phosphonooxybutanoate to phosphohydroxythreonine. The chain is Phosphoserine aminotransferase from Legionella pneumophila (strain Corby).